A 514-amino-acid polypeptide reads, in one-letter code: Glutathione-binding protein GsiB (514 aa).

Residues 1–26 (MARAVHRSGLVALGIATALMASCAFA) form the signal peptide.

This sequence belongs to the bacterial solute-binding protein 5 family. The complex is composed of two ATP-binding proteins (GsiA), two transmembrane proteins (GsiC and GsiD) and a solute-binding protein (GsiB).

Its subcellular location is the periplasm. In terms of biological role, part of the ABC transporter complex GsiABCD involved in glutathione import. Binds glutathione. The sequence is that of Glutathione-binding protein GsiB from Shigella flexneri serotype 5b (strain 8401).